The chain runs to 374 residues: 4-hydroxy-3-methylbut-2-en-1-yl diphosphate synthase (flavodoxin) (374 aa).

4 residues coordinate [4Fe-4S] cluster: C268, C271, C303, and E310.

This sequence belongs to the IspG family. Requires [4Fe-4S] cluster as cofactor.

The enzyme catalyses (2E)-4-hydroxy-3-methylbut-2-enyl diphosphate + oxidized [flavodoxin] + H2O + 2 H(+) = 2-C-methyl-D-erythritol 2,4-cyclic diphosphate + reduced [flavodoxin]. The protein operates within isoprenoid biosynthesis; isopentenyl diphosphate biosynthesis via DXP pathway; isopentenyl diphosphate from 1-deoxy-D-xylulose 5-phosphate: step 5/6. Functionally, converts 2C-methyl-D-erythritol 2,4-cyclodiphosphate (ME-2,4cPP) into 1-hydroxy-2-methyl-2-(E)-butenyl 4-diphosphate. This Geobacillus thermodenitrificans (strain NG80-2) protein is 4-hydroxy-3-methylbut-2-en-1-yl diphosphate synthase (flavodoxin).